A 546-amino-acid polypeptide reads, in one-letter code: Phosphomethylpyrimidine synthase (546 aa).

Substrate is bound by residues Asn145, Met174, Tyr203, His239, Ser259–Gly261, Asp300–Arg303, and Glu339. His343 contributes to the Zn(2+) binding site. Tyr366 serves as a coordination point for substrate. His407 serves as a coordination point for Zn(2+). Residues Cys487, Cys490, and Cys495 each contribute to the [4Fe-4S] cluster site.

This sequence belongs to the ThiC family. It depends on [4Fe-4S] cluster as a cofactor.

It carries out the reaction 5-amino-1-(5-phospho-beta-D-ribosyl)imidazole + S-adenosyl-L-methionine = 4-amino-2-methyl-5-(phosphooxymethyl)pyrimidine + CO + 5'-deoxyadenosine + formate + L-methionine + 3 H(+). Its pathway is cofactor biosynthesis; thiamine diphosphate biosynthesis. Catalyzes the synthesis of the hydroxymethylpyrimidine phosphate (HMP-P) moiety of thiamine from aminoimidazole ribotide (AIR) in a radical S-adenosyl-L-methionine (SAM)-dependent reaction. The protein is Phosphomethylpyrimidine synthase of Mycobacterium ulcerans (strain Agy99).